Here is a 596-residue protein sequence, read N- to C-terminus: Elongation factor 4 (596 aa).

Residues 2 to 183 enclose the tr-type G domain; that stretch reads ENIRNFSIIA…AIIERIPAPS (182 aa). Residues 14–19 and 130–133 contribute to the GTP site; these read DHGKST and NKID.

This sequence belongs to the TRAFAC class translation factor GTPase superfamily. Classic translation factor GTPase family. LepA subfamily.

It is found in the cell inner membrane. It catalyses the reaction GTP + H2O = GDP + phosphate + H(+). Its function is as follows. Required for accurate and efficient protein synthesis under certain stress conditions. May act as a fidelity factor of the translation reaction, by catalyzing a one-codon backward translocation of tRNAs on improperly translocated ribosomes. Back-translocation proceeds from a post-translocation (POST) complex to a pre-translocation (PRE) complex, thus giving elongation factor G a second chance to translocate the tRNAs correctly. Binds to ribosomes in a GTP-dependent manner. The chain is Elongation factor 4 from Nitratiruptor sp. (strain SB155-2).